We begin with the raw amino-acid sequence, 271 residues long: ATP synthase subunit a (271 aa).

Transmembrane regions (helical) follow at residues 47 to 67 (WENI…AYLG), 107 to 127 (FLGT…VPLM), 133 to 153 (SLNI…FLNI), 209 to 229 (ILIG…ETFV), and 235 to 255 (LPFM…FTLL).

Belongs to the ATPase A chain family. F-type ATPases have 2 components, CF(1) - the catalytic core - and CF(0) - the membrane proton channel. CF(1) has five subunits: alpha(3), beta(3), gamma(1), delta(1), epsilon(1). CF(0) has three main subunits: a(1), b(2) and c(9-12). The alpha and beta chains form an alternating ring which encloses part of the gamma chain. CF(1) is attached to CF(0) by a central stalk formed by the gamma and epsilon chains, while a peripheral stalk is formed by the delta and b chains.

It is found in the cell inner membrane. Functionally, key component of the proton channel; it plays a direct role in the translocation of protons across the membrane. The protein is ATP synthase subunit a of Protochlamydia amoebophila (strain UWE25).